A 428-amino-acid chain; its full sequence is Somatostatin receptor type 3 (428 aa).

Over residues Met1–Thr12 the composition is skewed to polar residues. The disordered stretch occupies residues Met1–Ser20. Topologically, residues Met1 to Gly45 are extracellular. Residues Asn18 and Asn31 are each glycosylated (N-linked (GlcNAc...) asparagine). Residues Ile46–Leu71 traverse the membrane as a helical segment. The Cytoplasmic portion of the chain corresponds to Arg72–Ser81. A helical transmembrane segment spans residues Val82–Ala103. The Extracellular segment spans residues Gln104–Arg118. Cys117 and Cys192 form a disulfide bridge. Residues Leu119–Val140 form a helical membrane-spanning segment. Residues Asp141 to Arg162 lie on the Cytoplasmic side of the membrane. A helical membrane pass occupies residues Thr163–Phe182. Residues Ser183–Ala206 are Extracellular-facing. The chain crosses the membrane as a helical span at residues Phe207–Val232. Residues Lys233–Arg266 are Cytoplasmic-facing. The chain crosses the membrane as a helical span at residues Met267–Val288. Residues Asn289–Gly302 lie on the Extracellular side of the membrane. The chain crosses the membrane as a helical span at residues Leu303–Leu325. Topologically, residues Ser326–Leu428 are cytoplasmic. Phosphoserine occurs at positions 341, 346, and 351. The segment at Ile344–Leu428 is disordered. A Phosphothreonine modification is found at Thr357. Over residues Thr357–Glu370 the composition is skewed to acidic residues. Residues Arg385 to Leu412 are compositionally biased toward polar residues.

It belongs to the G-protein coupled receptor 1 family. As to quaternary structure, homodimer and heterodimer with SSTR2. Heterodimerization with SSTR2 inactivates SSTR3 receptor function. In terms of processing, phosphorylated. Phosphorylation increases upon somatostatin binding. In terms of tissue distribution, in the brain, primarily observed in the forebrain. Moderate levels found throughout laminae 2-6 of the neocortex and allocortex, and high levels in lamina 2 of the piriform and entorhinal cortices. High levels also present in the cornu ammonis fields of the hippocampus. In the amygdala, highly expressed in the nucleus of the lateral olfactory tract with expression also detected in the rostral portions of the basal magnocellular and lateral nuclei. In the diencephalon, moderate levels observed in the ventromedial and arcuate nuclei of the hypothalamus. In the midbrain, moderate levels found in the lateral portion of the substantia nigra pars reticulata.

The protein localises to the cell membrane. Its function is as follows. Receptor for somatostatin-14 and -28. This receptor is coupled via pertussis toxin sensitive G proteins to inhibition of adenylyl cyclase. In Mus musculus (Mouse), this protein is Somatostatin receptor type 3 (Sstr3).